A 334-amino-acid polypeptide reads, in one-letter code: S-adenosylmethionine decarboxylase proenzyme (334 aa).

Phe7 contributes to the substrate binding site. Catalysis depends on residues Glu8 and Glu11. Residue Glu67 participates in substrate binding. Catalysis depends on Ser68, which acts as the Schiff-base intermediate with substrate; via pyruvic acid. Ser68 is modified (pyruvic acid (Ser); by autocatalysis). The Proton donor; for catalytic activity role is filled by Cys82. Phe223 is a substrate binding site. Catalysis depends on proton acceptor; for processing activity residues Ser229 and His243. Residue Glu247 participates in substrate binding. The residue at position 298 (Ser298) is a Phosphoserine.

This sequence belongs to the eukaryotic AdoMetDC family. In terms of assembly, heterotetramer of two alpha and two beta chains. The cofactor is pyruvate. In terms of processing, is synthesized initially as an inactive proenzyme. Formation of the active enzyme involves a self-maturation process in which the active site pyruvoyl group is generated from an internal serine residue via an autocatalytic post-translational modification. Two non-identical subunits are generated from the proenzyme in this reaction, and the pyruvate is formed at the N-terminus of the alpha chain, which is derived from the carboxyl end of the proenzyme. The post-translation cleavage follows an unusual pathway, termed non-hydrolytic serinolysis, in which the side chain hydroxyl group of the serine supplies its oxygen atom to form the C-terminus of the beta chain, while the remainder of the serine residue undergoes an oxidative deamination to produce ammonia and the pyruvoyl group blocking the N-terminus of the alpha chain.

It carries out the reaction S-adenosyl-L-methionine + H(+) = S-adenosyl 3-(methylsulfanyl)propylamine + CO2. It participates in amine and polyamine biosynthesis; S-adenosylmethioninamine biosynthesis; S-adenosylmethioninamine from S-adenosyl-L-methionine: step 1/1. In terms of biological role, essential for biosynthesis of the polyamines spermidine and spermine. Promotes maintenance and self-renewal of embryonic stem cells, by maintaining spermine levels. The protein is S-adenosylmethionine decarboxylase proenzyme (AMD1) of Mesocricetus auratus (Golden hamster).